Here is a 506-residue protein sequence, read N- to C-terminus: Glutamate--tRNA ligase (506 aa).

Positions Pro29 to Leu39 match the 'HIGH' region motif. Positions Lys273–Arg277 match the 'KMSKS' region motif. Residue Lys276 coordinates ATP.

The protein belongs to the class-I aminoacyl-tRNA synthetase family. Glutamate--tRNA ligase type 1 subfamily. Monomer.

It localises to the cytoplasm. The catalysed reaction is tRNA(Glu) + L-glutamate + ATP = L-glutamyl-tRNA(Glu) + AMP + diphosphate. In terms of biological role, catalyzes the attachment of glutamate to tRNA(Glu) in a two-step reaction: glutamate is first activated by ATP to form Glu-AMP and then transferred to the acceptor end of tRNA(Glu). This chain is Glutamate--tRNA ligase, found in Paenarthrobacter aurescens (strain TC1).